Reading from the N-terminus, the 102-residue chain is Small ribosomal subunit protein uS10 (102 aa).

The protein belongs to the universal ribosomal protein uS10 family. As to quaternary structure, part of the 30S ribosomal subunit.

Involved in the binding of tRNA to the ribosomes. This Rhodospirillum centenum (strain ATCC 51521 / SW) protein is Small ribosomal subunit protein uS10.